The chain runs to 442 residues: 3-phosphoshikimate 1-carboxyvinyltransferase (442 aa).

3-phosphoshikimate-binding residues include K25, S26, and R30. K25 provides a ligand contact to phosphoenolpyruvate. G97 and R125 together coordinate phosphoenolpyruvate. 3-phosphoshikimate is bound by residues S170, S171, Q172, D323, and K350. Position 172 (Q172) interacts with phosphoenolpyruvate. D323 (proton acceptor) is an active-site residue. Residues R354 and R399 each coordinate phosphoenolpyruvate.

This sequence belongs to the EPSP synthase family. In terms of assembly, monomer.

It is found in the cytoplasm. It catalyses the reaction 3-phosphoshikimate + phosphoenolpyruvate = 5-O-(1-carboxyvinyl)-3-phosphoshikimate + phosphate. The protein operates within metabolic intermediate biosynthesis; chorismate biosynthesis; chorismate from D-erythrose 4-phosphate and phosphoenolpyruvate: step 6/7. Functionally, catalyzes the transfer of the enolpyruvyl moiety of phosphoenolpyruvate (PEP) to the 5-hydroxyl of shikimate-3-phosphate (S3P) to produce enolpyruvyl shikimate-3-phosphate and inorganic phosphate. In Bartonella tribocorum (strain CIP 105476 / IBS 506), this protein is 3-phosphoshikimate 1-carboxyvinyltransferase.